Here is a 468-residue protein sequence, read N- to C-terminus: Monogalactosyldiacylglycerol synthase 2, chloroplastic (468 aa).

Residues histidine 82, arginine 251, glycine 361–glutamate 365, and glutamate 383 each bind UDP.

It belongs to the glycosyltransferase 28 family. In terms of tissue distribution, expressed mainly in floral buds. Detected in roots, leaves, stems, siliques and pollen tubes.

It is found in the plastid. It localises to the chloroplast outer membrane. The catalysed reaction is a 1,2-diacyl-sn-glycerol + UDP-alpha-D-galactose = a 1,2-diacyl-3-O-(beta-D-galactosyl)-sn-glycerol + UDP + H(+). It catalyses the reaction 1,2-di-(9Z,12Z-octadecadienoyl)-sn-glycerol + UDP-alpha-D-galactose = 1,2-di-(9Z,12Z-octadecadienoyl)-3-beta-D-galactosyl-sn-glycerol + UDP + H(+). The enzyme catalyses 1-(9Z-octadecenoyl)-2-hexadecanoyl-sn-glycerol + UDP-alpha-D-galactose = 1-(9Z-octadecenoyl)-2-hexadecanoyl-3-beta-D-galactosyl-sn-glycerol + UDP + H(+). It carries out the reaction 1,2-di-(9Z-octadecenoyl)-sn-glycerol + UDP-alpha-D-galactose = 1,2-di-(9Z-octadecenoyl)-3-beta-D-galactosyl-sn-glycerol + UDP + H(+). With respect to regulation, inhibited by galvestine-1. Its function is as follows. Involved in the synthesis of monogalactosyldiacylglycerol, the major structural component of photosynthetic membranes and in the chloroplast envelope biogenesis. Can use both prokaryotic (18:1/16:0) or eukaryotic (18:2/18:2) 1,2-diacylglycerol species, but operates with some preference for the eukaryotic one. Plays a minor role in galactolipid synthesis in chloroplasts. Is required for membrane lipid remodeling in phosphate-starved roots. Acts as the minor factor involved in digalactosyldiacylglycerol (DGDG) biosynthesis in phosphate-starved roots. Does not seem to be required for plant growth under nutrient-sufficient conditions. Required for membrane lipid remodeling in plants grown in acidic conditions. The polypeptide is Monogalactosyldiacylglycerol synthase 2, chloroplastic (Arabidopsis thaliana (Mouse-ear cress)).